Reading from the N-terminus, the 207-residue chain is dITP/XTP pyrophosphatase (207 aa).

11–16 (TGNPGK) provides a ligand contact to substrate. Asp72 acts as the Proton acceptor in catalysis. Asp72 lines the Mg(2+) pocket. Substrate contacts are provided by residues Ser73, 154–157 (FGYD), Lys177, and 182–183 (HR).

This sequence belongs to the HAM1 NTPase family. In terms of assembly, homodimer. It depends on Mg(2+) as a cofactor.

It catalyses the reaction XTP + H2O = XMP + diphosphate + H(+). The enzyme catalyses dITP + H2O = dIMP + diphosphate + H(+). The catalysed reaction is ITP + H2O = IMP + diphosphate + H(+). Its function is as follows. Pyrophosphatase that catalyzes the hydrolysis of nucleoside triphosphates to their monophosphate derivatives, with a high preference for the non-canonical purine nucleotides XTP (xanthosine triphosphate), dITP (deoxyinosine triphosphate) and ITP. Seems to function as a house-cleaning enzyme that removes non-canonical purine nucleotides from the nucleotide pool, thus preventing their incorporation into DNA/RNA and avoiding chromosomal lesions. This Thermus thermophilus (strain ATCC 27634 / DSM 579 / HB8) protein is dITP/XTP pyrophosphatase.